Reading from the N-terminus, the 231-residue chain is Enolase-phosphatase E1 (231 aa).

Residues 206-231 (LLERPGNAPQPKHSHPKISSFENFNP) form a disordered region.

Belongs to the HAD-like hydrolase superfamily. MasA/MtnC family. As to quaternary structure, monomer. The cofactor is Mg(2+).

The catalysed reaction is 5-methylsulfanyl-2,3-dioxopentyl phosphate + H2O = 1,2-dihydroxy-5-(methylsulfanyl)pent-1-en-3-one + phosphate. Its pathway is amino-acid biosynthesis; L-methionine biosynthesis via salvage pathway; L-methionine from S-methyl-5-thio-alpha-D-ribose 1-phosphate: step 3/6. The protein operates within amino-acid biosynthesis; L-methionine biosynthesis via salvage pathway; L-methionine from S-methyl-5-thio-alpha-D-ribose 1-phosphate: step 4/6. Bifunctional enzyme that catalyzes the enolization of 2,3-diketo-5-methylthiopentyl-1-phosphate (DK-MTP-1-P) into the intermediate 2-hydroxy-3-keto-5-methylthiopentenyl-1-phosphate (HK-MTPenyl-1-P), which is then dephosphorylated to form the acireductone 1,2-dihydroxy-3-keto-5-methylthiopentene (DHK-MTPene). In Leptospira borgpetersenii serovar Hardjo-bovis (strain JB197), this protein is Enolase-phosphatase E1.